A 158-amino-acid polypeptide reads, in one-letter code: Ribosomal RNA large subunit methyltransferase H (158 aa).

Residues Leu76, Gly107, and 126 to 131 (LSGLTM) contribute to the S-adenosyl-L-methionine site.

The protein belongs to the RNA methyltransferase RlmH family. In terms of assembly, homodimer.

It is found in the cytoplasm. It carries out the reaction pseudouridine(1915) in 23S rRNA + S-adenosyl-L-methionine = N(3)-methylpseudouridine(1915) in 23S rRNA + S-adenosyl-L-homocysteine + H(+). Specifically methylates the pseudouridine at position 1915 (m3Psi1915) in 23S rRNA. This Teredinibacter turnerae (strain ATCC 39867 / T7901) protein is Ribosomal RNA large subunit methyltransferase H.